A 78-amino-acid polypeptide reads, in one-letter code: UPF0291 protein Ldb1355 (78 aa).

The protein belongs to the UPF0291 family.

The protein resides in the cytoplasm. The polypeptide is UPF0291 protein Ldb1355 (Lactobacillus delbrueckii subsp. bulgaricus (strain ATCC 11842 / DSM 20081 / BCRC 10696 / JCM 1002 / NBRC 13953 / NCIMB 11778 / NCTC 12712 / WDCM 00102 / Lb 14)).